Here is a 142-residue protein sequence, read N- to C-terminus: Photosystem II extrinsic protein U (142 aa).

An N-terminal signal peptide occupies residues 1–29; that stretch reads MKGLVRLLTVFSLLLGCWGWLGTTQIAQA.

This sequence belongs to the PsbU family. As to quaternary structure, PSII is composed of 1 copy each of membrane proteins PsbA, PsbB, PsbC, PsbD, PsbE, PsbF, PsbH, PsbI, PsbJ, PsbK, PsbL, PsbM, PsbT, PsbX, PsbY, PsbZ, Psb30/Ycf12, peripheral proteins PsbO, CyanoQ (PsbQ), PsbU, PsbV and a large number of cofactors. It forms dimeric complexes.

It localises to the cellular thylakoid membrane. Its function is as follows. One of the extrinsic, lumenal subunits of photosystem II (PSII). PSII is a light-driven water plastoquinone oxidoreductase, using light energy to abstract electrons from H(2)O, generating a proton gradient subsequently used for ATP formation. The extrinsic proteins stabilize the structure of photosystem II oxygen-evolving complex (OEC), the ion environment of oxygen evolution and protect the OEC against heat-induced inactivation. This chain is Photosystem II extrinsic protein U, found in Trichormus variabilis (strain ATCC 29413 / PCC 7937) (Anabaena variabilis).